The following is a 218-amino-acid chain: Adenylate kinase (218 aa).

10–15 (GAGKGT) contributes to the ATP binding site. The NMP stretch occupies residues 30 to 59 (STGDMLRAAVKAGTPLGQQAKAVMDAGKLV). AMP-binding positions include Thr-31, Arg-36, 57 to 59 (KLV), 85 to 88 (GFPR), and Gln-92. The LID stretch occupies residues 122 to 159 (GRRSHPASGRTYHVKFNPPKVEGKDDVTGEDLIQREDD). Residues Arg-123 and 132–133 (TY) contribute to the ATP site. Positions 127–147 (PASGRTYHVKFNPPKVEGKDD) are disordered. AMP-binding residues include Arg-156 and Arg-167. Gly-203 contacts ATP.

The protein belongs to the adenylate kinase family. As to quaternary structure, monomer.

The protein localises to the cytoplasm. The catalysed reaction is AMP + ATP = 2 ADP. It participates in purine metabolism; AMP biosynthesis via salvage pathway; AMP from ADP: step 1/1. In terms of biological role, catalyzes the reversible transfer of the terminal phosphate group between ATP and AMP. Plays an important role in cellular energy homeostasis and in adenine nucleotide metabolism. The protein is Adenylate kinase of Paracidovorax citrulli (strain AAC00-1) (Acidovorax citrulli).